Reading from the N-terminus, the 361-residue chain is Alternative oxidase, mitochondrial (361 aa).

Residues 155–175 (LIRYVFLESVAGVPGMVAGML) form a helical membrane-spanning segment. The Fe cation site is built by E162, E201, and H204. Residues 221–241 (MILGAQGVFFNSFFLCYLFSP) traverse the membrane as a helical segment. 4 residues coordinate Fe cation: E252, E253, E309, and H312. The disordered stretch occupies residues 320-361 (GNLKQDEDPNPFVSEYGKERGEKPGKGIESLKPVGWERDEVI). Residues 335 to 345 (YGKERGEKPGK) are compositionally biased toward basic and acidic residues.

This sequence belongs to the alternative oxidase family. It depends on Fe cation as a cofactor.

It localises to the mitochondrion inner membrane. Catalyzes cyanide-resistant oxygen consumption. May increase respiration when the cytochrome respiratory pathway is restricted, or in response to low temperatures. The sequence is that of Alternative oxidase, mitochondrial (aox) from Botryotinia fuckeliana (Noble rot fungus).